Here is a 478-residue protein sequence, read N- to C-terminus: UDP-N-acetylmuramate--L-alanine ligase (478 aa).

130–136 (GTHGKTT) contributes to the ATP binding site.

Belongs to the MurCDEF family.

Its subcellular location is the cytoplasm. It carries out the reaction UDP-N-acetyl-alpha-D-muramate + L-alanine + ATP = UDP-N-acetyl-alpha-D-muramoyl-L-alanine + ADP + phosphate + H(+). It functions in the pathway cell wall biogenesis; peptidoglycan biosynthesis. Functionally, cell wall formation. This chain is UDP-N-acetylmuramate--L-alanine ligase, found in Microcystis aeruginosa (strain NIES-843 / IAM M-2473).